Here is a 218-residue protein sequence, read N- to C-terminus: Glutathione S-transferase Mu 2 (218 aa).

Positions proline 2–glycine 88 constitute a GST N-terminal domain. A glutathione-binding site is contributed by tyrosine 7 to tryptophan 8. 2 positions are modified to phosphoserine: serine 27 and serine 44. Residues arginine 43–tryptophan 46, lysine 50, asparagine 59–leucine 60, and glutamine 72–serine 73 contribute to the glutathione site. In terms of domain architecture, GST C-terminal spans serine 90 to valine 208. Substrate is bound at residue tyrosine 116.

Belongs to the GST superfamily. Mu family. As to quaternary structure, homodimer. As to expression, muscle.

The protein localises to the cytoplasm. It carries out the reaction RX + glutathione = an S-substituted glutathione + a halide anion + H(+). The catalysed reaction is 11(S)-hydroxy-14(S),15(S)-epoxy-(5Z,8Z,12E)-eicosatrienoate + glutathione = (11S,15S)-dihydroxy-14(R)-S-glutathionyl-(5Z,8Z,12E)-eicosatrienoate. Its function is as follows. Conjugation of reduced glutathione to a wide number of exogenous and endogenous hydrophobic electrophiles. Participates in the formation of novel hepoxilin regioisomers. The sequence is that of Glutathione S-transferase Mu 2 from Homo sapiens (Human).